Here is a 370-residue protein sequence, read N- to C-terminus: DNA replication and repair protein RecF (370 aa).

30 to 37 is an ATP binding site; that stretch reads GQNGMGKT.

Belongs to the RecF family.

It is found in the cytoplasm. Its function is as follows. The RecF protein is involved in DNA metabolism; it is required for DNA replication and normal SOS inducibility. RecF binds preferentially to single-stranded, linear DNA. It also seems to bind ATP. The protein is DNA replication and repair protein RecF of Bacteroides fragilis (strain ATCC 25285 / DSM 2151 / CCUG 4856 / JCM 11019 / LMG 10263 / NCTC 9343 / Onslow / VPI 2553 / EN-2).